We begin with the raw amino-acid sequence, 437 residues long: Enolase 1 (437 aa).

Residue Lys60 forms a Glycyl lysine isopeptide (Lys-Gly) (interchain with G-Cter in ubiquitin) linkage. Phosphoserine occurs at positions 119 and 138. Substrate-binding residues include His160 and Glu169. Ser188 bears the Phosphoserine mark. Glu212 serves as the catalytic Proton donor. A Glycyl lysine isopeptide (Lys-Gly) (interchain with G-Cter in ubiquitin) cross-link involves residue Lys243. Mg(2+)-binding residues include Asp247 and Glu296. Residue Glu296 participates in substrate binding. Thr313 carries the post-translational modification Phosphothreonine. Asp321 contributes to the substrate binding site. Asp321 serves as a coordination point for Mg(2+). The residue at position 324 (Thr324) is a Phosphothreonine. Catalysis depends on Lys346, which acts as the Proton acceptor. Lys358 is covalently cross-linked (Glycyl lysine isopeptide (Lys-Gly) (interchain with G-Cter in ubiquitin)). Substrate-binding positions include 373–376 (SHRS) and Lys397.

Belongs to the enolase family. Homodimer. Mg(2+) serves as cofactor.

It is found in the cytoplasm. It carries out the reaction (2R)-2-phosphoglycerate = phosphoenolpyruvate + H2O. It participates in carbohydrate degradation; glycolysis; pyruvate from D-glyceraldehyde 3-phosphate: step 4/5. The chain is Enolase 1 (ENO1) from Saccharomyces cerevisiae (strain ATCC 204508 / S288c) (Baker's yeast).